A 275-amino-acid chain; its full sequence is Uridine-5'-phosphate dioxygenase (275 aa).

Fe cation is bound by residues H105, D107, and H247.

Fe(2+) serves as cofactor.

It catalyses the reaction UMP + 2-oxoglutarate + O2 = uridine-5'-aldehyde + succinate + phosphate + CO2. Its pathway is antibiotic biosynthesis. Enhanced by ascorbic acid and inhibited by Zn(2+). Functionally, dioxygenase involved in the biosynthesis of the capuramycin-type nucleoside antibiotic A-102395. Catalyzes the dephosphorylation and oxidation of UMP to generate uridine-5'-aldehyde. Can also use the alternative alpha-keto acids pyruvate and alpha-ketoadipate (2-oxoadipate), with very low efficiency. Cannot use alpha-ketobutyrate, alpha-ketovalerate and oxaloacetate. The protein is Uridine-5'-phosphate dioxygenase of Amycolatopsis sp.